We begin with the raw amino-acid sequence, 215 residues long: Ras-related protein Rab-5A (215 aa).

Residues S29, A30, G32, K33, S34, S35, H46, E47, T52, and G78 each contribute to the GTP site. S34 provides a ligand contact to Mg(2+). 2 consecutive short sequence motifs (switch) follow at residues 44–56 (QFHE…IGAA) and 77–93 (AGQE…YRGA). T52 provides a ligand contact to Mg(2+). The residue at position 84 (S84) is a Phosphoserine. 5 residues coordinate GTP: N133, K134, D136, A164, and K165. The segment at 181–215 (LPKNEPQNPGANSARGRGVDLTEPAQPARSQCCSN) is disordered. S-geranylgeranyl cysteine attachment occurs at residues C212 and C213.

This sequence belongs to the small GTPase superfamily. Rab family. Interacts with GDI1; this promotes dissociation from membranes; phosphorylation at Ser-84 disrupts this interaction. Interacts with GDI2; phosphorylation at Ser-84 disrupts the interaction. Interacts with EEA1. Interacts with RIN1 and GAPVD1, which regulate its pathway, probably by acting as a GEF. Interacts with ALS2CL, SUN2, ZFYVE20 and RUFY1. Interacts with RABEP1; one RABEP1 homodimer binds two RAB5A chains, but at opposite sides of the dimer. Interacts with SGSM1, SGSM3 and PIK3CB. Interacts with RINL. May be a component of a complex composed of RAB5A, DYN2 and PIK3C3. Does not interact with the BLOC-3 complex (heterodimer of HPS1 and HPS4). Interacts with CLN5. Interacts with APPL2. Interacts with F8A1/F8A2/F8A3. Found in a complex with F8A1/F8A2/F8A3, HTT and RAB5A; mediates the recruitment of HTT by RAB5A onto early endosomes. Interacts with ATP9A. Interacts with PPP1R21; mediates the recruitment of FERRY complex by RAB5A onto early endosomes. It depends on Mg(2+) as a cofactor. Post-translationally, phosphorylation of Ser-84 in the switch II region by LRRK2 prevents the association of RAB regulatory proteins, including RAB GDP dissociation inhibitors GDI1 and GDI2.

It localises to the cell membrane. The protein localises to the early endosome membrane. Its subcellular location is the melanosome. It is found in the cytoplasmic vesicle. The protein resides in the cell projection. It localises to the ruffle. The protein localises to the membrane. Its subcellular location is the cytoplasm. It is found in the cytosol. The protein resides in the phagosome membrane. It localises to the endosome membrane. The catalysed reaction is GTP + H2O = GDP + phosphate + H(+). Its activity is regulated as follows. Regulated by guanine nucleotide exchange factors (GEFs) including RINL, which promote the exchange of bound GDP for free GTP. Regulated by GTPase activating proteins (GAPs) which increase the GTP hydrolysis activity. Inhibited by GDP dissociation inhibitors (GDIs). Functionally, the small GTPases Rab are key regulators of intracellular membrane trafficking, from the formation of transport vesicles to their fusion with membranes. Rabs cycle between an inactive GDP-bound form and an active GTP-bound form that is able to recruit to membranes different sets of downstream effectors directly responsible for vesicle formation, movement, tethering and fusion. RAB5A is required for the fusion of plasma membranes and early endosomes. Contributes to the regulation of filopodia extension. Required for the exosomal release of SDCBP, CD63, PDCD6IP and syndecan. Regulates maturation of apoptotic cell-containing phagosomes, probably downstream of DYN2 and PIK3C3. The chain is Ras-related protein Rab-5A from Rattus norvegicus (Rat).